The sequence spans 601 residues: Glutathione-regulated potassium-efflux system protein KefB (601 aa).

13 helical membrane-spanning segments follow: residues 4-24 (SDFLLAGVLFLFAAVAAVPLA), 29-49 (IGAVLGYLLAGIAIGPWGLGF), 55-75 (EILHFSELGVVFLMFIIGLEL), 87-107 (IFGVGAAQVLLSAALLAGLLM), 115-135 (AAVVGGIGLAMSSTAMALQLM), 152-172 (VLLFQDLAVIPALALVPLLAG), 177-197 (HFDWMKIGMKVLAFVGMLIGG), 207-227 (FIAASGVREVFTAATLLLVLG), 230-250 (LFMDALGLSMALGTFIAGVLL), 268-288 (GLLLGLFFISVGMSLNLGVLY), 291-311 (LLWVVISVVVLVAVKILVLYL), 324-344 (MQFAGVLSQGGEFAFVLFSTA), and 356-376 (ALLLVTVTLSMMTTPLLMKLV). The RCK N-terminal domain occupies 400-519 (KPQVIVVGFG…AGVTQFSRET (120 aa)).

This sequence belongs to the monovalent cation:proton antiporter 2 (CPA2) transporter (TC 2.A.37) family. KefB subfamily. As to quaternary structure, interacts with the regulatory subunit KefG.

It localises to the cell inner membrane. Its function is as follows. Pore-forming subunit of a potassium efflux system that confers protection against electrophiles. Catalyzes K(+)/H(+) antiport. This Escherichia coli (strain SMS-3-5 / SECEC) protein is Glutathione-regulated potassium-efflux system protein KefB.